The chain runs to 413 residues: Cardiolipin synthase B (413 aa).

PLD phosphodiesterase domains follow at residues 108 to 135 and 285 to 312; these read VFRR…SSEH and RRRP…DPLS. Residues His-113, Lys-115, Asp-120, His-290, Lys-292, and Asp-297 contribute to the active site. The tract at residues 388–413 is disordered; the sequence is TQVDPPAQPTMETQDRVETENTGVNP.

It belongs to the phospholipase D family. Cardiolipin synthase subfamily. ClsB sub-subfamily.

The protein localises to the cell membrane. It catalyses the reaction 2 a 1,2-diacyl-sn-glycero-3-phospho-(1'-sn-glycerol) = a cardiolipin + glycerol. Its function is as follows. Catalyzes the phosphatidyl group transfer from one phosphatidylglycerol molecule to another to form cardiolipin (CL) (diphosphatidylglycerol) and glycerol. The polypeptide is Cardiolipin synthase B (Shigella flexneri).